Here is a 241-residue protein sequence, read N- to C-terminus: MORN repeat-containing protein 3 (241 aa).

An interaction with MDM2 region spans residues 6–35 (CPRKVEPPWKGWDRKAQKNGLRHQVFAVNG). 7 MORN repeats span residues 38–60 (YVGEWKGNLKHGKGTQVWKKSGA), 62–84 (YEGDWKFGKRDGYGSLSHPDPET), 91–113 (YSGWWKGDKKSGYGIQFFGPKEY), 114–136 (YEGEWCNNQRSGWGRMYYNNGDI), 137–159 (YEGQWQNDKPEGEGMLRLKNGNR), 160–182 (YEGIWERGMKNGHGRFFHLDHGQ), and 184–205 (FEGYWVDNVAKCGTMIDFGRDE). An interaction with SIRT1 region spans residues 76-100 (SLSHPDPETGKLRRVYSGWWKGDKK). The interval 206–240 (APEPTQFPIPKVEILDPDGVLKEALDKLMKPEEEE) is interaction with TP53.

In terms of assembly, interacts with MEIG1. Interacts with TP53, MDM2 and SIRT1; the interactions mediate post-transcriptional modifications of TP53 by MDM2 and SIRT1. In terms of tissue distribution, expressed in testis (at protein level).

The protein resides in the cytoplasmic vesicle. The protein localises to the secretory vesicle. It is found in the acrosome. Assembles a suppression complex (suppresome) by tethering SIRT1 and MDM2 to regulate composite modifications of p53/TP53. Confers both deacetylation-mediated functional inactivation, by SIRT1, and ubiquitination-dependent degradation, by MDM2, of p53/TP53, promoting a proliferative and cell survival behaviors. May play a role in the regulation of spermatogenesis. The protein is MORN repeat-containing protein 3 (Morn3) of Mus musculus (Mouse).